A 475-amino-acid chain; its full sequence is Dihydrolipoyl dehydrogenase (475 aa).

FAD-binding positions include 36-45 (ERYSTLGGVC), lysine 54, and glycine 117. A disulfide bond links cysteine 45 and cysteine 50. Residues 182 to 186 (GGGII), glutamate 205, valine 238, and 270 to 273 (AIGR) contribute to the NAD(+) site. 2 residues coordinate FAD: aspartate 313 and alanine 321. Histidine 445 serves as the catalytic Proton acceptor.

This sequence belongs to the class-I pyridine nucleotide-disulfide oxidoreductase family. The cofactor is FAD.

The protein resides in the cytoplasm. The enzyme catalyses N(6)-[(R)-dihydrolipoyl]-L-lysyl-[protein] + NAD(+) = N(6)-[(R)-lipoyl]-L-lysyl-[protein] + NADH + H(+). Functionally, the branched-chain alpha-keto dehydrogenase complex catalyzes the overall conversion of alpha-keto acids to acyl-CoA and CO(2). It contains multiple copies of 3 enzymatic components: branched-chain alpha-keto acid decarboxylase (E1), lipoamide acyltransferase (E2) and lipoamide dehydrogenase (E3). The chain is Dihydrolipoyl dehydrogenase (lpd) from Vibrio parahaemolyticus serotype O3:K6 (strain RIMD 2210633).